The primary structure comprises 255 residues: 2,3-dehydroadipyl-CoA hydratase (255 aa).

This sequence belongs to the enoyl-CoA hydratase/isomerase family.

The enzyme catalyses a (3S)-3-hydroxyacyl-CoA = a (2E)-enoyl-CoA + H2O. It catalyses the reaction a 4-saturated-(3S)-3-hydroxyacyl-CoA = a (3E)-enoyl-CoA + H2O. It functions in the pathway aromatic compound metabolism; phenylacetate degradation. Its function is as follows. Catalyzes the reversible conversion of enzymatically produced 2,3-dehydroadipyl-CoA into 3-hydroxyadipyl-CoA. This Escherichia coli (strain K12) protein is 2,3-dehydroadipyl-CoA hydratase (paaF).